The following is a 534-amino-acid chain: Pentatricopeptide repeat-containing protein At5g08305 (534 aa).

PPR repeat units lie at residues 41 to 71 (PFVS…LSDP), 72 to 106 (PNYG…GLLP), 107 to 141 (DHMT…GLEW), 142 to 172 (DLFI…MPHK), 173 to 203 (NLVT…MSER), 204 to 238 (DVVT…GSSK), 240 to 274 (NEVT…HLPL), 275 to 305 (TVIL…ASVK), 308 to 342 (DALM…KIDP), 343 to 377 (DEIT…GAEP), and 378 to 408 (KSEH…MPIK). The type E motif stretch occupies residues 413 to 488 (MLGALLNGCI…IAGHSILDLD (76 aa)). The type E(+) motif stretch occupies residues 489 to 519 (GTRHRFIAHDKTHFHSDKIYAVLQLTGAWMN).

This sequence belongs to the PPR family. PCMP-E subfamily.

This Arabidopsis thaliana (Mouse-ear cress) protein is Pentatricopeptide repeat-containing protein At5g08305 (PCMP-E105).